The following is a 290-amino-acid chain: ATP synthase gamma chain (290 aa).

It belongs to the ATPase gamma chain family. In terms of assembly, F-type ATPases have 2 components, CF(1) - the catalytic core - and CF(0) - the membrane proton channel. CF(1) has five subunits: alpha(3), beta(3), gamma(1), delta(1), epsilon(1). CF(0) has three main subunits: a, b and c.

It localises to the cell membrane. In terms of biological role, produces ATP from ADP in the presence of a proton gradient across the membrane. The gamma chain is believed to be important in regulating ATPase activity and the flow of protons through the CF(0) complex. This chain is ATP synthase gamma chain, found in Heliobacterium modesticaldum (strain ATCC 51547 / Ice1).